The following is a 257-amino-acid chain: Imidazole glycerol phosphate synthase subunit HisF (257 aa).

Active-site residues include Asp-12 and Asp-131.

It belongs to the HisA/HisF family. As to quaternary structure, heterodimer of HisH and HisF.

It is found in the cytoplasm. It carries out the reaction 5-[(5-phospho-1-deoxy-D-ribulos-1-ylimino)methylamino]-1-(5-phospho-beta-D-ribosyl)imidazole-4-carboxamide + L-glutamine = D-erythro-1-(imidazol-4-yl)glycerol 3-phosphate + 5-amino-1-(5-phospho-beta-D-ribosyl)imidazole-4-carboxamide + L-glutamate + H(+). Its pathway is amino-acid biosynthesis; L-histidine biosynthesis; L-histidine from 5-phospho-alpha-D-ribose 1-diphosphate: step 5/9. Functionally, IGPS catalyzes the conversion of PRFAR and glutamine to IGP, AICAR and glutamate. The HisF subunit catalyzes the cyclization activity that produces IGP and AICAR from PRFAR using the ammonia provided by the HisH subunit. The chain is Imidazole glycerol phosphate synthase subunit HisF from Teredinibacter turnerae (strain ATCC 39867 / T7901).